A 927-amino-acid polypeptide reads, in one-letter code: Clumping factor A (927 aa).

A signal peptide spans 1–39; that stretch reads MNMKKKEKHAIRKKSIGVASVLVGTLIGFGLLSSKEADA. Residues 9–20 carry the YSIRK-G/S signaling motif motif; sequence HAIRKKSIGVAS. Disordered stretches follow at residues 34–200 and 529–898; these read SKEA…SNKD and FNNG…SEDE. Residues 40–542 form a ligand binding A region region; that stretch reads SENSVTQSDS…SGSGDGIDKP (503 aa). Residues 47-65 show a composition bias toward low complexity; the sequence is SDSASNESKSNDSSSVSAA. The span at 71–105 shows a compositional bias: polar residues; sequence TNVSDTKTSSNTNNGETSVAQNPAQQETTQSSSTN. Composition is skewed to low complexity over residues 106-132 and 143-162; these read ATTEETPVTGEATTTTTNQANTPATTQ and NQTSNETTSNDTNTVSSVNS. Over residues 163–200 the composition is skewed to polar residues; that stretch reads PQNSTNAENVSTTQDTSTEATPSNNESAPQSTDASNKD. Positions 547–565 are enriched in acidic residues; that stretch reads QPDEPGEIEPIPEDSDSDP. A compositionally biased stretch (low complexity) spans 566-598; the sequence is GSDSGSDSNSDSGSDSGSDSTSDSGSDSASDSD. The segment covering 599-855 has biased composition (acidic residues); that stretch reads SASDSDSASD…DSDSESDSNS (257 aa). Residues 856 to 867 show a composition bias toward low complexity; it reads DSESVSNNNVVP. Positions 881-890 are enriched in basic and acidic residues; it reads NEAKDSKEPL. Residues 890–894 carry the LPXTG sorting signal motif; the sequence is LPDTG. At Thr-893 the chain carries Pentaglycyl murein peptidoglycan amidated threonine. Positions 894–927 are cleaved as a propeptide — removed by sortase; the sequence is GSEDEANTSLIWGLLASIGSLLLFRRKKENKDKK.

Belongs to the serine-aspartate repeat-containing protein (SDr) family.

The protein resides in the secreted. It is found in the cell wall. In terms of biological role, cell surface-associated protein implicated in virulence. Promotes bacterial attachment exclusively to the gamma-chain of human fibrinogen. Induces formation of bacterial clumps, which diminish the ability of group IIA phospholipase A2 to cause bacterial phospholipid hydrolysis and killing. Significantly decreases macrophage phagocytosis possibly thanks to the clumps, clumped bacteria being too large to be phagocytosed. Dominant factor responsible for human platelet aggregation, which may be an important mechanism for initiating infective endocarditis. Enhances spleen cell proliferative response in vitro, contributing significantly to the immunostimulatory activity of S.aureus. The polypeptide is Clumping factor A (clfA) (Staphylococcus aureus (strain NCTC 8325 / PS 47)).